The primary structure comprises 373 residues: Sodium-dependent organic anion transporter (373 aa).

Residues 1–15 are compositionally biased toward polar residues; it reads MSTDCAGNSTCPVNS. The disordered stretch occupies residues 1–21; sequence MSTDCAGNSTCPVNSTEEDPP. At 1 to 32 the chain is on the extracellular side; sequence MSTDCAGNSTCPVNSTEEDPPVGMEGHANLKL. N-linked (GlcNAc...) asparagine glycans are attached at residues asparagine 8 and asparagine 14. A helical transmembrane segment spans residues 33–53; it reads LFTVLSAVMVGLVMFSFGCSV. Topologically, residues 54–67 are cytoplasmic; that stretch reads ESQKLWLHLRRPWG. A helical membrane pass occupies residues 68–88; the sequence is IAVGLLSQFGLMPLTAYLLAI. Over 89–97 the chain is Extracellular; that stretch reads GFGLKPFQA. A helical transmembrane segment spans residues 98-118; it reads IAVLMMGSCPGGTISNVLTFW. The Cytoplasmic segment spans residues 119–126; it reads VDGDMDLS. A helical transmembrane segment spans residues 127–147; that stretch reads ISMTTCSTVAALGMMPLCLYI. The Extracellular portion of the chain corresponds to 148–157; it reads YTRSWTLTQN. A helical transmembrane segment spans residues 158 to 178; the sequence is LVIPYQSIGITLVSLVVPVAS. Over 179-195 the chain is Cytoplasmic; sequence GVYVNYRWPKQATVILK. Residues 196 to 216 form a helical membrane-spanning segment; that stretch reads VGAILGGMLLLVVAVTGMVLA. Residues 217 to 224 are Extracellular-facing; sequence KGWNTDVT. Residues 225–245 form a helical membrane-spanning segment; sequence LLVISCIFPLVGHVTGFLLAF. Over 246 to 265 the chain is Cytoplasmic; the sequence is LTHQSWQRCRTISIETGAQN. The helical transmembrane segment at 266–283 threads the bilayer; it reads IQLCIAMLQLSFSAEYLV. A topological domain (extracellular) is located at residue glutamine 284. Residues 285–305 form a helical membrane-spanning segment; the sequence is LLNFALAYGLFQVLHGLLIVA. Residues 306–373 are Cytoplasmic-facing; it reads AYQAYKRRQK…ELTSHIPSCE (68 aa).

The protein belongs to the bile acid:sodium symporter (BASS) (TC 2.A.28) family. In terms of processing, glycosylated. As to expression, highest expression in lung and testis, moderate expression in heart, bladder and skin, and low expression in blood, liver, stomach, small intestine, spleen, kidney, adrenal gland, seminal vesicle, preputial gland, coagulating gland, lacrimal gland/eye, and brain.

It localises to the membrane. The enzyme catalyses estrone 3-sulfate(out) + 2 Na(+)(out) = estrone 3-sulfate(in) + 2 Na(+)(in). The catalysed reaction is 17beta-estradiol 3-sulfate(out) + 2 Na(+)(out) = 17beta-estradiol 3-sulfate(in) + 2 Na(+)(in). It carries out the reaction dehydroepiandrosterone 3-sulfate(out) + 2 Na(+)(out) = dehydroepiandrosterone 3-sulfate(in) + 2 Na(+)(in). It catalyses the reaction androst-5-ene-diol 3-sulfate(out) + 2 Na(+)(out) = androst-5-ene-diol 3-sulfate(in) + 2 Na(+)(in). The enzyme catalyses pregnenolone sulfate(out) + 2 Na(+)(out) = pregnenolone sulfate(in) + 2 Na(+)(in). The catalysed reaction is taurolithocholate 3-sulfate(out) + 2 Na(+)(out) = taurolithocholate 3-sulfate(in) + 2 Na(+)(in). It carries out the reaction androsterone 3alpha-sulfate(out) + 2 Na(+)(out) = androsterone 3alpha-sulfate(in) + 2 Na(+)(in). It catalyses the reaction 5alpha-dihydrotestosterone sulfate(out) + 2 Na(+)(out) = 5alpha-dihydrotestosterone sulfate(in) + 2 Na(+)(in). The enzyme catalyses 17beta-estradiol 17-sulfate(out) + 2 Na(+)(out) = 17beta-estradiol 17-sulfate(in) + 2 Na(+)(in). The catalysed reaction is 17alpha-hydroxypregnenolone 3-sulfate(out) + 2 Na(+)(out) = 17alpha-hydroxypregnenolone 3-sulfate(in) + 2 Na(+)(in). It carries out the reaction epiandrosterone 3-sulfate(out) + 2 Na(+)(out) = epiandrosterone 3-sulfate(in) + 2 Na(+)(in). It catalyses the reaction epitestosterone 17-sulfate(out) + 2 Na(+)(out) = epitestosterone 17-sulfate(in) + 2 Na(+)(in). The enzyme catalyses testosterone 17-sulfate(out) + 2 Na(+)(out) = testosterone 17-sulfate(in) + 2 Na(+)(in). The catalysed reaction is 16alpha-hydroxydehydroepiandrosterone 3-sulfate(out) + 2 Na(+)(out) = 16alpha-hydroxydehydroepiandrosterone 3-sulfate(in) + 2 Na(+)(in). In terms of biological role, transports sulfoconjugated steroid hormones from the extracellular compartment into the cytosol in a sodium-dependent manner without hydrolysis. Steroid sulfate hormones are commonly considered to be biologically inactive metabolites, that may be activated by steroid sulfatases into free steroids. May play an important role by delivering sulfoconjugated steroids to specific target cells in reproductive organs. May play a role transporting the estriol precursor 16alpha-hydroxydehydroepiandrosterone 3-sulfate (16a-OH-DHEAS) at the fetal blood vessel endothelium. Can also transport other sulfoconjugated molecules such as taurolithocholic acid-3-sulfate and sulfoconjugated pyrenes. This is Sodium-dependent organic anion transporter (Slc10a6) from Mus musculus (Mouse).